A 336-amino-acid polypeptide reads, in one-letter code: uncharacterized protein (336 aa).

The disordered stretch occupies residues 162–195 (ARGLPVHSSFKQNNSSQTSSNKGTTTVAAGSGSD). The segment covering 169 to 187 (SSFKQNNSSQTSSNKGTTT) has biased composition (low complexity).

The protein belongs to the AHA1 family.

This is an uncharacterized protein from Schizosaccharomyces pombe (strain 972 / ATCC 24843) (Fission yeast).